The primary structure comprises 492 residues: MDFWLYKQAQQNGHHIAITDGQESYTYQNLYCEASLLAKRLKAYQQSRVGLYIDNSIQSIILIHACWLANIEIAMINTRLTPNEMKNQMRSIDVQLIFCTLPLELRGFQIVLLDDIEFAGRDITMNGLLDNTMDIQYDTSNETVVPKDSPSNILNTSFNLDDIASIMFTSGTTGPQKAVPQTFRNHYASAIGCKESLGFDRDTNWLSVLPIYHISGLSVLLRAVIEGFTVRIVDKFNAEQILTMIKNERITHISLVPQTLNWLMQQGLHEPYDLQKILLGGAKLSATMIETALQYNLPIYNSFGMTETCSQFLTATPQMLHARPDTVGMPSANVDVKIKNPNKEGHGELMIKGANVMNGYLYPTDLTGTFENGYFNTGDIAEIDYEGYVMIYDRRKDLIISGGENIYPYQIETVAKQFPGISDAVCVGHPDDTWGQVPKLYFVSESDISKAQLIAYLSQHLAKYKIPKHFEKVDTLPYTSTGKLQRNKLYRG.

Belongs to the ATP-dependent AMP-binding enzyme family. MenE subfamily.

The catalysed reaction is 2-succinylbenzoate + ATP + CoA = 2-succinylbenzoyl-CoA + AMP + diphosphate. It functions in the pathway quinol/quinone metabolism; 1,4-dihydroxy-2-naphthoate biosynthesis; 1,4-dihydroxy-2-naphthoate from chorismate: step 5/7. The protein operates within quinol/quinone metabolism; menaquinone biosynthesis. Its function is as follows. Converts 2-succinylbenzoate (OSB) to 2-succinylbenzoyl-CoA (OSB-CoA). This Staphylococcus aureus (strain bovine RF122 / ET3-1) protein is 2-succinylbenzoate--CoA ligase.